The sequence spans 360 residues: Catabolic L-serine/threonine dehydratase (360 aa).

Ser-2 carries the post-translational modification N-acetylserine. Lys-37 bears the N6-(pyridoxal phosphate)lysine mark.

It belongs to the serine/threonine dehydratase family. Pyridoxal 5'-phosphate is required as a cofactor.

Its subcellular location is the mitochondrion. The enzyme catalyses L-serine = pyruvate + NH4(+). The catalysed reaction is L-threonine = 2-oxobutanoate + NH4(+). The polypeptide is Catabolic L-serine/threonine dehydratase (CHA1) (Saccharomyces cerevisiae (strain ATCC 204508 / S288c) (Baker's yeast)).